The sequence spans 92 residues: Sec-independent protein translocase protein TatA (92 aa).

A helical membrane pass occupies residues 2-22 (IPANFGGTELIILLVIILLLF). The tract at residues 43–92 (KGTSGAYEELEEKKGEEEKDEGGKKEAEASGRGEEEQQARAAGEAGRKQG) is disordered. The segment covering 53 to 80 (EEKKGEEEKDEGGKKEAEASGRGEEEQQ) has biased composition (basic and acidic residues).

The protein belongs to the TatA/E family. The Tat system comprises two distinct complexes: a TatABC complex, containing multiple copies of TatA, TatB and TatC subunits, and a separate TatA complex, containing only TatA subunits. Substrates initially bind to the TatABC complex, which probably triggers association of the separate TatA complex to form the active translocon.

It is found in the cell membrane. In terms of biological role, part of the twin-arginine translocation (Tat) system that transports large folded proteins containing a characteristic twin-arginine motif in their signal peptide across membranes. TatA could form the protein-conducting channel of the Tat system. This is Sec-independent protein translocase protein TatA from Rubrobacter xylanophilus (strain DSM 9941 / JCM 11954 / NBRC 16129 / PRD-1).